Reading from the N-terminus, the 626-residue chain is (+)-3-carene synthase 1, chloroplastic (626 aa).

The transit peptide at Met1–Ala45 directs the protein to the chloroplast. Mg(2+) contacts are provided by Asp377, Asp381, and Asp529. Positions Asp377 to Asp381 match the DDXXD motif motif.

It belongs to the terpene synthase family. Tpsd subfamily. The cofactor is Mg(2+). Requires Mn(2+) as cofactor.

Its subcellular location is the plastid. The protein localises to the chloroplast. The catalysed reaction is (2E)-geranyl diphosphate = (+)-car-3-ene + diphosphate. It carries out the reaction (2E)-geranyl diphosphate = terpinolene + diphosphate. It participates in terpene metabolism; oleoresin biosynthesis. Its pathway is secondary metabolite biosynthesis; terpenoid biosynthesis. In terms of biological role, monoterpene synthase (TPS) involved in the biosynthesis of monoterpene natural products included in conifer oleoresin secretions and volatile emissions; these compounds contribute to biotic and abiotic stress defense against herbivores and pathogens. Catalyzes the conversion of (2E)-geranyl diphosphate (GPP) to (+)-3-carene and, to a lower extent, to terpinolene. The polypeptide is (+)-3-carene synthase 1, chloroplastic (Pinus banksiana (Jack pine)).